Here is a 101-residue protein sequence, read N- to C-terminus: MAYPLEKALDVMVSTFHKYSGKEGDKFKLNKSELKELLTRELPSFLGKRTDETAFQKLMSNLDCNKDNEVDFQEYCVFLSCIAMMCNEFFEGFPDKQPRKK.

A2 bears the N-acetylalanine mark. The residue at position 7 (K7) is an N6-acetyllysine. EF-hand domains follow at residues 13-48 (VSTF…FLGK) and 50-85 (TDET…IAMM). Residues K28 and E33 each coordinate Ca(2+). K35 is subject to N6-acetyllysine. Positions 63, 65, 67, 69, and 74 each coordinate Ca(2+).

Belongs to the S-100 family. As to quaternary structure, homodimer. Interacts with PPFIBP1 in a calcium-dependent mode. Interacts with PGLYRP1; this complex acts as a chemoattractant that promotes lymphocyte movement. Interacts with MYH9; this interaction increases cell motility. Interacts with Annexin 2/ANXA2. Interacts with TP53; this interaction promotes TP53 degradation. Interacts with CCR5 and CXCR3. Interacts with FCGR3A; this interaction inhibits PKC-dependent phosphorylation of FCGR3A.

The protein resides in the secreted. It localises to the nucleus. Its subcellular location is the cytoplasm. Functionally, calcium-binding protein that plays a role in various cellular processes including motility, angiogenesis, cell differentiation, apoptosis, and autophagy. Increases cell motility and invasiveness by interacting with non-muscle myosin heavy chain (NMMHC) IIA/MYH9. Mechanistically, promotes filament depolymerization and increases the amount of soluble myosin-IIA, resulting in the formation of stable protrusions facilitating chemotaxis. Also modulates the pro-apoptotic function of TP53 by binding to its C-terminal transactivation domain within the nucleus and reducing its protein levels. Within the extracellular space, stimulates cytokine production including granulocyte colony-stimulating factor and CCL24 from T-lymphocytes. In addition, stimulates T-lymphocyte chemotaxis by acting as a chemoattractant complex with PGLYRP1 that promotes lymphocyte migration via CCR5 and CXCR3 receptors. This is Protein S100-A4 (S100A4) from Bos taurus (Bovine).